The primary structure comprises 624 residues: Protein FAM234B (624 aa).

Residues 1–91 are disordered; it reads MATVLSRALK…GFPSEPLGGL (91 aa). Ser16 bears the Phosphoserine mark. Thr26 carries the phosphothreonine modification. Residues Ser30, Ser33, and Ser63 each carry the phosphoserine modification. A helical transmembrane segment spans residues 107-127; it reads VFLLTLVISMVLVLLCAFLIP.

The protein belongs to the FAM234 family.

It localises to the membrane. It is found in the golgi outpost. The protein localises to the cytoplasm. Its subcellular location is the cytoskeleton. The protein resides in the microtubule organizing center. The sequence is that of Protein FAM234B from Mus musculus (Mouse).